A 324-amino-acid chain; its full sequence is tRNA dimethylallyltransferase (324 aa).

17–24 (GPTASGKT) is a binding site for ATP. Substrate is bound at residue 19 to 24 (TASGKT). 3 interaction with substrate tRNA regions span residues 42 to 45 (DSAL), 166 to 170 (QRIQR), and 251 to 256 (RCVGYR).

The protein belongs to the IPP transferase family. Monomer. Mg(2+) serves as cofactor.

The enzyme catalyses adenosine(37) in tRNA + dimethylallyl diphosphate = N(6)-dimethylallyladenosine(37) in tRNA + diphosphate. Functionally, catalyzes the transfer of a dimethylallyl group onto the adenine at position 37 in tRNAs that read codons beginning with uridine, leading to the formation of N6-(dimethylallyl)adenosine (i(6)A). The sequence is that of tRNA dimethylallyltransferase from Burkholderia pseudomallei (strain 1106a).